We begin with the raw amino-acid sequence, 248 residues long: Segregation and condensation protein A (248 aa).

The protein belongs to the ScpA family. As to quaternary structure, component of a cohesin-like complex composed of ScpA, ScpB and the Smc homodimer, in which ScpA and ScpB bind to the head domain of Smc. The presence of the three proteins is required for the association of the complex with DNA.

It is found in the cytoplasm. Its function is as follows. Participates in chromosomal partition during cell division. May act via the formation of a condensin-like complex containing Smc and ScpB that pull DNA away from mid-cell into both cell halves. The polypeptide is Segregation and condensation protein A (Clostridium perfringens (strain SM101 / Type A)).